A 270-amino-acid polypeptide reads, in one-letter code: Gap junction beta-3 protein (270 aa).

The Cytoplasmic portion of the chain corresponds to 1–20; sequence MDWKKLQDLLSGVNQYSTAF. Residues 21 to 40 form a helical membrane-spanning segment; it reads GRIWLSVVFVFRVLVYVVAA. Residues 41 to 75 lie on the Extracellular side of the membrane; the sequence is ERVWGDEQKDFDCNTRQPGCTNVCYDNFFPISNIR. A helical transmembrane segment spans residues 76 to 98; it reads LWALQLIFVTCPSMLVILHVAYR. Over 99 to 126 the chain is Cytoplasmic; that stretch reads EERERKHRQKHGEQCAKLYSHPGKKHGG. The chain crosses the membrane as a helical span at residues 127-149; that stretch reads LWWTYLFSLIFKLIIELVFLYVL. The Extracellular segment spans residues 150 to 188; it reads HTLWHGFTMPRLVQCASIVPCPNTVDCYIARPTEKKVFT. Residues 189–211 form a helical membrane-spanning segment; it reads YFMVGASAVCIILTICEICYLIF. Over 212-270 the chain is Cytoplasmic; the sequence is HRIMRGISKGKSTKSISSPKSSSRASTCRCHHKLLESGDPEADPASEKLQASAPSLTPI. The tract at residues 246–270 is disordered; sequence LESGDPEADPASEKLQASAPSLTPI.

This sequence belongs to the connexin family. Beta-type (group I) subfamily. In terms of assembly, a connexon is composed of a hexamer of connexins. Interacts with CNST.

It localises to the cell membrane. Its subcellular location is the cell junction. The protein resides in the gap junction. Functionally, one gap junction consists of a cluster of closely packed pairs of transmembrane channels, the connexons, through which materials of low MW diffuse from one cell to a neighboring cell. The chain is Gap junction beta-3 protein (Gjb3) from Mus musculus (Mouse).